The chain runs to 64 residues: Cytochrome c oxidase subunit 5C-2 (64 aa).

The chain crosses the membrane as a helical span at residues 15-34 (SVVKELVIGTVLGLAAGGLW).

The protein belongs to the cytochrome c oxidase subunit 5C family.

It localises to the mitochondrion inner membrane. In terms of biological role, this protein is one of the nuclear-coded polypeptide chains of cytochrome c oxidase, the terminal oxidase in mitochondrial electron transport. In Helianthus annuus (Common sunflower), this protein is Cytochrome c oxidase subunit 5C-2 (COX5C2).